The chain runs to 187 residues: UPF0340 protein str1894 (187 aa).

This sequence belongs to the UPF0340 family.

The protein is UPF0340 protein str1894 of Streptococcus thermophilus (strain CNRZ 1066).